The following is a 425-amino-acid chain: MMSVLKKICGSKNSLKSFDNEVYQSIEKELQRQKSQLQLIASENFASKAVMEAQGSFLTNKYAEGYPGKRYYCGCEHVDKIESLAIERLCKLFGVKFANVQPHSGSQANQAVFASLLTPGDTILGLSLSCGGHLTHGAAPSLSGKWFKSIQYTVNKDTYLLDMDEIEKLALEHKPKLIIAGASAYPRKMDFKRFREIADKVGAYLLADIAHYAGLIAAGEYPSPAEYAHVMTSTTHKTLRGPRGGIVMTNDEILHKKIQSAVFPGLQGGPLMHVIAAKAVAFKEALAPEFKTYSKKVVENAKVLAQELQKHGLDIITGGTDSHIVLVDLRSQKLTGKDVVDSLERAGITCNKNSVPFDTAKPTITSGLRFGTAAETTRGLEAENFKEIADLINEVIQGLISGNSSSVEKAVKAKVERICSNFPIY.

Residues leucine 128 and 132 to 134 (GHL) each bind (6S)-5,6,7,8-tetrahydrofolate. Lysine 237 carries the post-translational modification N6-(pyridoxal phosphate)lysine.

This sequence belongs to the SHMT family. Homodimer. Pyridoxal 5'-phosphate is required as a cofactor.

It localises to the cytoplasm. It catalyses the reaction (6R)-5,10-methylene-5,6,7,8-tetrahydrofolate + glycine + H2O = (6S)-5,6,7,8-tetrahydrofolate + L-serine. It participates in one-carbon metabolism; tetrahydrofolate interconversion. The protein operates within amino-acid biosynthesis; glycine biosynthesis; glycine from L-serine: step 1/1. Functionally, catalyzes the reversible interconversion of serine and glycine with tetrahydrofolate (THF) serving as the one-carbon carrier. This reaction serves as the major source of one-carbon groups required for the biosynthesis of purines, thymidylate, methionine, and other important biomolecules. Also exhibits THF-independent aldolase activity toward beta-hydroxyamino acids, producing glycine and aldehydes, via a retro-aldol mechanism. This chain is Serine hydroxymethyltransferase, found in Wolbachia sp. subsp. Drosophila simulans (strain wRi).